Consider the following 284-residue polypeptide: Fructosamine kinase FrlD (284 aa).

It belongs to the carbohydrate kinase PfkB family.

Catalyzes the phosphorylation of a range of fructosamines to fructosamine 6-phosphates. This is Fructosamine kinase FrlD (frlD) from Bacillus subtilis (strain 168).